The following is a 44-amino-acid chain: Thymosin beta-4, Y-chromosomal (44 aa).

The disordered stretch occupies residues 1–44 (MSDKPGMAEIEKFDKSKLKKTETQEKNPLSSKETIEQERQAGES). Composition is skewed to basic and acidic residues over residues 9-25 (EIEK…ETQE) and 33-44 (ETIEQERQAGES).

This sequence belongs to the thymosin beta family. In terms of tissue distribution, ubiquitous.

The protein localises to the cytoplasm. The protein resides in the cytoskeleton. In terms of biological role, plays an important role in the organization of the cytoskeleton. Binds to and sequesters actin monomers (G actin) and therefore inhibits actin polymerization. In Homo sapiens (Human), this protein is Thymosin beta-4, Y-chromosomal (TMSB4Y).